The primary structure comprises 582 residues: Aspartate--tRNA ligase (582 aa).

E174 contacts L-aspartate. Residues 198-201 (QITK) are aspartate. Residue R220 participates in L-aspartate binding. ATP contacts are provided by residues 220 to 222 (RDE) and Q229. Position 443 (H443) interacts with L-aspartate. An ATP-binding site is contributed by E477. R484 is a binding site for L-aspartate. Position 529–532 (529–532 (GLDR)) interacts with ATP.

This sequence belongs to the class-II aminoacyl-tRNA synthetase family. Type 1 subfamily. As to quaternary structure, homodimer.

Its subcellular location is the cytoplasm. It carries out the reaction tRNA(Asp) + L-aspartate + ATP = L-aspartyl-tRNA(Asp) + AMP + diphosphate. In terms of biological role, catalyzes the attachment of L-aspartate to tRNA(Asp) in a two-step reaction: L-aspartate is first activated by ATP to form Asp-AMP and then transferred to the acceptor end of tRNA(Asp). This Streptococcus pyogenes serotype M18 (strain MGAS8232) protein is Aspartate--tRNA ligase.